The following is a 385-amino-acid chain: Na(+)/H(+) antiporter NhaA (385 aa).

The next 11 helical transmembrane spans lie at 9-29, 45-65, 87-107, 114-134, 155-175, 198-218, 220-235, 245-265, 282-302, 312-332, and 345-365; these read YSAIFLLCSAALAIIFANVLD, IFGLITPHDIVADFLLAVFFF, IIPGVCAAGGILVPISIYLSV, GWPVPTATDVAFSLGILAIFG, AGIVIIATAFSVSISYWWIIV, TFLIIPAMLLCALAAWVSVYQ, GIHATIAGVMLGIMLN, ALEPYINGIILPAFAFLAAMV, ILLGLLFGKLLGISVFGIIAL, FFNLLVVSALGGIGFTVSLLM, and QGVIAVLIGSLLSAILAIILM.

The protein belongs to the NhaA Na(+)/H(+) (TC 2.A.33) antiporter family.

It is found in the cell membrane. The catalysed reaction is Na(+)(in) + 2 H(+)(out) = Na(+)(out) + 2 H(+)(in). Functionally, na(+)/H(+) antiporter that extrudes sodium in exchange for external protons. The sequence is that of Na(+)/H(+) antiporter NhaA from Tropheryma whipplei (strain TW08/27) (Whipple's bacillus).